We begin with the raw amino-acid sequence, 236 residues long: Purine nucleoside phosphorylase DeoD-type (236 aa).

His5 is an a purine D-ribonucleoside binding site. Phosphate-binding positions include Gly21, Arg25, Arg44, and 88–91; that span reads RIGS. A purine D-ribonucleoside is bound by residues 180–182 and 204–205; these read EME and SD. The active-site Proton donor is Asp205.

The protein belongs to the PNP/UDP phosphorylase family. As to quaternary structure, homohexamer; trimer of homodimers.

The enzyme catalyses a purine D-ribonucleoside + phosphate = a purine nucleobase + alpha-D-ribose 1-phosphate. The catalysed reaction is a purine 2'-deoxy-D-ribonucleoside + phosphate = a purine nucleobase + 2-deoxy-alpha-D-ribose 1-phosphate. In terms of biological role, catalyzes the reversible phosphorolytic breakdown of the N-glycosidic bond in the beta-(deoxy)ribonucleoside molecules, with the formation of the corresponding free purine bases and pentose-1-phosphate. The sequence is that of Purine nucleoside phosphorylase DeoD-type from Chromobacterium violaceum (strain ATCC 12472 / DSM 30191 / JCM 1249 / CCUG 213 / NBRC 12614 / NCIMB 9131 / NCTC 9757 / MK).